Consider the following 1872-residue polypeptide: Ral GTPase-activating protein subunit alpha-2 (1872 aa).

Residues Ser373, Ser376, and Ser379 each carry the phosphoserine modification. Residues 446–469 are compositionally biased toward basic and acidic residues; sequence DKKDVAEEDADKLGLSETDSKEVS. The segment at 446 to 481 is disordered; it reads DKKDVAEEDADKLGLSETDSKEVSSESSGHKRSSSW. Ser486 and Ser696 each carry phosphoserine. 2 disordered regions span residues 711 to 730 and 758 to 849; these read FRSA…NTVR and QPVP…TGSD. The residue at position 715 (Thr715) is a Phosphothreonine; by PKB. Residues 775-795 show a composition bias toward polar residues; that stretch reads SDSSQGQKVENSQNLSSSEPK. Basic and acidic residues predominate over residues 796-810; it reads SVQESKGHVTHEHEG. Phosphoserine is present on residues Ser819 and Ser820. Over residues 824 to 843 the composition is skewed to basic and acidic residues; the sequence is LDLKEESQQTHGRCRERQKS. Ser1592 bears the Phosphoserine mark. Positions 1634-1842 constitute a Rap-GAP domain; that stretch reads LKNLDSRQCR…EERALYLEAI (209 aa).

In terms of assembly, component of the heterodimeric RalGAP2 complex with RALGAPB. Heterodimerization is required for activity. Highly expressed in lung, liver, testis and thymus with lower levels in brain and heart (at protein level).

The protein localises to the cytoplasm. In terms of biological role, catalytic subunit of the heterodimeric RalGAP2 complex which acts as a GTPase activator for the Ras-like small GTPases RALA and RALB. The polypeptide is Ral GTPase-activating protein subunit alpha-2 (Rattus norvegicus (Rat)).